The chain runs to 344 residues: Transmembrane protein 268 (344 aa).

Residues 1-31 are disordered; it reads MACEPQMDPGGAAGPLPTSSPGWSPLPGGSP. Positions 14–27 are enriched in low complexity; it reads GPLPTSSPGWSPLP. Transmembrane regions (helical) follow at residues 106-126 and 133-153; these read AFAV…SQMF and AGVL…VVIF. The tract at residues 244–266 is disordered; it reads TANEGPENLLEETPLLPDRPGST. Low complexity predominate over residues 247–259; sequence EGPENLLEETPLL.

Interacts with ITGAM; this interaction inhibits ITGAM degradation via the endosome-lysosome pathway. Interacts with ITGB4; this interaction prevents ITGB4 degradation.

It localises to the cell membrane. Stabilizes cell surface expression of ITGAM and participates in the adhesion and migration of phagocytes during bacterial clearance. In Bos taurus (Bovine), this protein is Transmembrane protein 268 (TMEM268).